A 400-amino-acid chain; its full sequence is Nicotinate phosphoribosyltransferase (400 aa).

Histidine 220 is modified (phosphohistidine; by autocatalysis).

Belongs to the NAPRTase family. Post-translationally, transiently phosphorylated on a His residue during the reaction cycle. Phosphorylation strongly increases the affinity for substrates and increases the rate of nicotinate D-ribonucleotide production. Dephosphorylation regenerates the low-affinity form of the enzyme, leading to product release.

It carries out the reaction nicotinate + 5-phospho-alpha-D-ribose 1-diphosphate + ATP + H2O = nicotinate beta-D-ribonucleotide + ADP + phosphate + diphosphate. It participates in cofactor biosynthesis; NAD(+) biosynthesis; nicotinate D-ribonucleotide from nicotinate: step 1/1. Catalyzes the synthesis of beta-nicotinate D-ribonucleotide from nicotinate and 5-phospho-D-ribose 1-phosphate at the expense of ATP. In Escherichia coli O7:K1 (strain IAI39 / ExPEC), this protein is Nicotinate phosphoribosyltransferase.